Reading from the N-terminus, the 116-residue chain is Protein AV2 (116 aa).

It belongs to the geminiviridae protein AV2/V2 family. As to quaternary structure, interacts with host SGS3.

It localises to the host cytoplasm. Its subcellular location is the host perinuclear region. Functionally, through its interaction with host SGS3, acts as a suppressor of RNA-mediated gene silencing, also known as post-transcriptional gene silencing (PTGS), a mechanism of plant viral defense that limits the accumulation of viral RNAs. This Mungbean yellow mosaic virus (strain Vigna) (MYMV) protein is Protein AV2.